Reading from the N-terminus, the 81-residue chain is MKTLLLSPVVVTIVCLDLGYTMTCCNQQSSQPKTTTNCAGNSCYKKTWSDHRGTIIERGCGCPQVKSGIKLECCHTNECNN.

A signal peptide spans 1 to 21 (MKTLLLSPVVVTIVCLDLGYT). Intrachain disulfides connect Cys-24–Cys-43, Cys-38–Cys-60, Cys-62–Cys-73, and Cys-74–Cys-79.

The protein belongs to the three-finger toxin family. Short-chain subfamily. Type I alpha-neurotoxin sub-subfamily. Expressed by the venom gland.

The protein localises to the secreted. Its function is as follows. Binds to muscle nicotinic acetylcholine receptor (nAChR) and inhibit acetylcholine from binding to the receptor, thereby impairing neuromuscular transmission. The sequence is that of Short neurotoxin 1 from Hydrophis peronii (Spiny-headed seasnake).